Consider the following 145-residue polypeptide: Aminoglycoside N(6')-acetyltransferase type 1 (145 aa).

The N-acetyltransferase domain maps to M1–C145. Residues W22, H25, Y66, and E79 each coordinate substrate. Acetyl-CoA is bound by residues I81–V83 and Q89–K94. D115 lines the substrate pocket. N120 contributes to the acetyl-CoA binding site. Residue E136 participates in substrate binding.

In terms of assembly, homodimer.

The enzyme catalyses kanamycin B + acetyl-CoA = N(6')-acetylkanamycin B + CoA + H(+). Its function is as follows. Catalyzes the transfer of an acetyl group from acetyl-CoA to the 6'-amino group of aminoglycoside molecules conferring resistance to antibiotics containing the purpurosamine ring. The protein is Aminoglycoside N(6')-acetyltransferase type 1 of Salmonella typhimurium (strain LT2 / SGSC1412 / ATCC 700720).